Consider the following 203-residue polypeptide: N-(5'-phosphoribosyl)anthranilate isomerase (203 aa).

This sequence belongs to the TrpF family.

It catalyses the reaction N-(5-phospho-beta-D-ribosyl)anthranilate = 1-(2-carboxyphenylamino)-1-deoxy-D-ribulose 5-phosphate. It participates in amino-acid biosynthesis; L-tryptophan biosynthesis; L-tryptophan from chorismate: step 3/5. The protein is N-(5'-phosphoribosyl)anthranilate isomerase of Geobacter sulfurreducens (strain ATCC 51573 / DSM 12127 / PCA).